A 360-amino-acid chain; its full sequence is Phenylalanine--tRNA ligase alpha subunit (360 aa).

Glutamate 260 contacts Mg(2+).

This sequence belongs to the class-II aminoacyl-tRNA synthetase family. Phe-tRNA synthetase alpha subunit type 1 subfamily. In terms of assembly, tetramer of two alpha and two beta subunits. It depends on Mg(2+) as a cofactor.

It localises to the cytoplasm. The enzyme catalyses tRNA(Phe) + L-phenylalanine + ATP = L-phenylalanyl-tRNA(Phe) + AMP + diphosphate + H(+). This Methylobacterium sp. (strain 4-46) protein is Phenylalanine--tRNA ligase alpha subunit.